Here is a 343-residue protein sequence, read N- to C-terminus: S-adenosylmethionine:tRNA ribosyltransferase-isomerase (343 aa).

Belongs to the QueA family. In terms of assembly, monomer.

It localises to the cytoplasm. It carries out the reaction 7-aminomethyl-7-carbaguanosine(34) in tRNA + S-adenosyl-L-methionine = epoxyqueuosine(34) in tRNA + adenine + L-methionine + 2 H(+). It participates in tRNA modification; tRNA-queuosine biosynthesis. Transfers and isomerizes the ribose moiety from AdoMet to the 7-aminomethyl group of 7-deazaguanine (preQ1-tRNA) to give epoxyqueuosine (oQ-tRNA). This Stenotrophomonas maltophilia (strain R551-3) protein is S-adenosylmethionine:tRNA ribosyltransferase-isomerase.